The following is a 65-amino-acid chain: Gene 51 protein (65 aa).

This Mycobacterium phage D29 (Mycobacteriophage D29) protein is Gene 51 protein (51).